A 291-amino-acid chain; its full sequence is Syntaxin-1A homolog (291 aa).

The interval 1-24 is disordered; sequence MTKDRLSALKAAQSEDEQDDDMHM. Over 1–266 the chain is Cytoplasmic; the sequence is MTKDRLSALK…QYQSKARRKK (266 aa). Residues 69–95 are a coiled coil; sequence NDQKTKEELDELMAVIKRAANKVRGKL. Residues 193–255 form the t-SNARE coiled-coil homology domain; sequence LADIEARHND…DRAVADTKKA (63 aa). The helical; Anchor for type IV membrane protein transmembrane segment at 267-287 threads the bilayer; sequence ICILVTGVILITGLIIFILFY. The Extracellular portion of the chain corresponds to 288–291; sequence AKVL.

This sequence belongs to the syntaxin family. Interacts (via N-terminus, in open or in closed conformation) with unc-18; the interaction is direct. Interaction in open conformation with unc-18 promotes synaptic vesicle docking and tethering. Interaction via N-terminus with unc-18 mediates the secretion of the neurotransmitter acetylcholine from cholinergic motor neurons. Interaction with unc-18 is reduced in the presence of unc-13. As to expression, expressed throughout the head ganglion, nerve ring, ventral cord, dorsal cord, intestine, vulva and spermatheca.

It localises to the cell membrane. The protein localises to the cell projection. The protein resides in the axon. Its subcellular location is the dendrite. It is found in the perikaryon. Plays a critical role in several secretory processes, including cuticle secretion and neurotransmitter release, and probably assists in neuronal membrane maturation or the final stages of neuronal differentiation. Plays a role in synaptic vesicle docking and tethering through its association with unc-18. Through binding to unc-18 mediates the release of the neurotransmitter acetylcholine from cholinergic motor neurons, and thereby promotes locomotory behaviors. Essential for embryonic viability and development. Has a role in dauer formation and adult life span. Required for locomotion. Probably by regulating neuronal transmission downstream of lin-3 and receptor lin-23 and phospholipase plc-3 and upstream of innexin unc-7 and egl-4/PKG in ALA neurons, involved in the decrease in pharyngeal pumping during the quiescent state that precedes each larval molt. The sequence is that of Syntaxin-1A homolog from Caenorhabditis elegans.